Reading from the N-terminus, the 356-residue chain is Methionine import ATP-binding protein MetN 1 (356 aa).

Residues 15 to 254 (IQIRALNKTY…PVQPITQELL (240 aa)) enclose the ABC transporter domain. Residue 51 to 58 (GKSGAGKS) participates in ATP binding.

The protein belongs to the ABC transporter superfamily. Methionine importer (TC 3.A.1.24) family. The complex is composed of two ATP-binding proteins (MetN), two transmembrane proteins (MetI) and a solute-binding protein (MetQ).

Its subcellular location is the cell inner membrane. The catalysed reaction is L-methionine(out) + ATP + H2O = L-methionine(in) + ADP + phosphate + H(+). The enzyme catalyses D-methionine(out) + ATP + H2O = D-methionine(in) + ADP + phosphate + H(+). Its function is as follows. Part of the ABC transporter complex MetNIQ involved in methionine import. Responsible for energy coupling to the transport system. This is Methionine import ATP-binding protein MetN 1 from Acinetobacter baylyi (strain ATCC 33305 / BD413 / ADP1).